A 368-amino-acid polypeptide reads, in one-letter code: tRNA(Met) cytidine acetate ligase (368 aa).

Residues 7-20 (IAEFNPFHNGHKYL), Gly-96, Asn-152, and Arg-175 contribute to the ATP site.

The protein belongs to the TmcAL family.

The protein localises to the cytoplasm. It carries out the reaction cytidine(34) in elongator tRNA(Met) + acetate + ATP = N(4)-acetylcytidine(34) in elongator tRNA(Met) + AMP + diphosphate. Catalyzes the formation of N(4)-acetylcytidine (ac(4)C) at the wobble position of elongator tRNA(Met), using acetate and ATP as substrates. First activates an acetate ion to form acetyladenylate (Ac-AMP) and then transfers the acetyl group to tRNA to form ac(4)C34. The chain is tRNA(Met) cytidine acetate ligase from Streptococcus pyogenes serotype M49 (strain NZ131).